The following is a 347-amino-acid chain: Phosphoribosylformylglycinamidine cyclo-ligase (347 aa).

Belongs to the AIR synthase family.

It is found in the cytoplasm. It carries out the reaction 2-formamido-N(1)-(5-O-phospho-beta-D-ribosyl)acetamidine + ATP = 5-amino-1-(5-phospho-beta-D-ribosyl)imidazole + ADP + phosphate + H(+). Its pathway is purine metabolism; IMP biosynthesis via de novo pathway; 5-amino-1-(5-phospho-D-ribosyl)imidazole from N(2)-formyl-N(1)-(5-phospho-D-ribosyl)glycinamide: step 2/2. The chain is Phosphoribosylformylglycinamidine cyclo-ligase from Desulfatibacillum aliphaticivorans.